Consider the following 229-residue polypeptide: tRNA pseudouridine synthase B (229 aa).

Asp-42 (nucleophile) is an active-site residue.

This sequence belongs to the pseudouridine synthase TruB family. Type 1 subfamily.

It catalyses the reaction uridine(55) in tRNA = pseudouridine(55) in tRNA. In terms of biological role, responsible for synthesis of pseudouridine from uracil-55 in the psi GC loop of transfer RNAs. This Ureaplasma urealyticum serovar 10 (strain ATCC 33699 / Western) protein is tRNA pseudouridine synthase B.